Here is a 102-residue protein sequence, read N- to C-terminus: MYAVVRTGGKQYKVSEGDFLKVEKLEGAVGDTVNLSEVLMVGGDKVAIGTPLVPSASVVGKIVEQGKDKKILVFKSKRRKDSRKLNGHRQLRTILKIEKINA.

It belongs to the bacterial ribosomal protein bL21 family. As to quaternary structure, part of the 50S ribosomal subunit. Contacts protein L20.

Functionally, this protein binds to 23S rRNA in the presence of protein L20. This chain is Large ribosomal subunit protein bL21, found in Geotalea daltonii (strain DSM 22248 / JCM 15807 / FRC-32) (Geobacter daltonii).